A 352-amino-acid polypeptide reads, in one-letter code: Nicotinate-nucleotide--dimethylbenzimidazole phosphoribosyltransferase (352 aa).

Residue E318 is the Proton acceptor of the active site.

The protein belongs to the CobT family.

It carries out the reaction 5,6-dimethylbenzimidazole + nicotinate beta-D-ribonucleotide = alpha-ribazole 5'-phosphate + nicotinate + H(+). It functions in the pathway nucleoside biosynthesis; alpha-ribazole biosynthesis; alpha-ribazole from 5,6-dimethylbenzimidazole: step 1/2. Its function is as follows. Catalyzes the synthesis of alpha-ribazole-5'-phosphate from nicotinate mononucleotide (NAMN) and 5,6-dimethylbenzimidazole (DMB). The sequence is that of Nicotinate-nucleotide--dimethylbenzimidazole phosphoribosyltransferase from Dehalococcoides mccartyi (strain ATCC BAA-2100 / JCM 16839 / KCTC 5957 / BAV1).